An 81-amino-acid polypeptide reads, in one-letter code: Large ribosomal subunit protein uL23 (81 aa).

Belongs to the universal ribosomal protein uL23 family. In terms of assembly, part of the 50S ribosomal subunit. Contacts protein L29.

In terms of biological role, binds to 23S rRNA. One of the proteins that surrounds the polypeptide exit tunnel on the outside of the ribosome. The sequence is that of Large ribosomal subunit protein uL23 from Pyrobaculum aerophilum (strain ATCC 51768 / DSM 7523 / JCM 9630 / CIP 104966 / NBRC 100827 / IM2).